The following is a 145-amino-acid chain: Arginine repressor (145 aa).

This sequence belongs to the ArgR family.

The protein localises to the cytoplasm. Its pathway is amino-acid biosynthesis; L-arginine biosynthesis [regulation]. In terms of biological role, regulates arginine biosynthesis genes. The polypeptide is Arginine repressor (Solibacter usitatus (strain Ellin6076)).